A 399-amino-acid polypeptide reads, in one-letter code: Immunoglobulin heavy constant gamma 1 (399 aa).

The disordered stretch occupies residues 1-21 (ASTKGPSVFPLAPSSKSTSGG). Residues 1-98 (ASTKGPSVFP…PSNTKVDKKV (98 aa)) form a CH1 region. Residues 1 to 350 (ASTKGPSVFP…DGELDGLWTT (350 aa)) lie on the Extracellular side of the membrane. Ig-like domains follow at residues 6–99 (PSVF…KKVE), 121–220 (PSVF…KTIS), and 229–325 (PQVY…KSLS). Cys27 and Cys83 are oxidised to a cystine. Positions 99–110 (EPKSCDKTHTCP) are hinge. The tract at residues 111 to 223 (PCPAPELLGG…PIEKTISKAK (113 aa)) is CH2. 2 cysteine pairs are disulfide-bonded: Cys144-Cys204 and Cys250-Cys308. The N-linked (GlcNAc...) (complex) asparagine glycan is linked to Asn180. The segment at 224-330 (GQPREPQVYT…QKSLSLSPEL (107 aa)) is CH3. Residues 351–371 (ITIFITLFLLSVCYSATVTFF) form a helical membrane-spanning segment. Residues 372-399 (KVKWIFSSVVDLKQTIIPDYRNMIGQGA) lie on the Cytoplasmic side of the membrane.

In terms of assembly, immunoglobulins are composed of two identical heavy chains and two identical light chains; disulfide-linked. Interacts with FCGR1A; this interaction mediates IgG effector functions on monocytes. Interacts with FCGR2A and FCGR3A. Post-translationally, glycosylation on Asn-180 is required for interaction with Fc receptors and ability to activate the complement pathway. In terms of processing, (Microbial infection) Deglycosylation on Asn-180 by S.pyogenes EndoS or Endos2 endoglucosidases prevents interaction between immunoglobulin-gamma (IgG) and Fc receptors, impairing ability to activate the complement pathway.

It is found in the secreted. It localises to the cell membrane. Functionally, constant region of immunoglobulin heavy chains. Immunoglobulins, also known as antibodies, are membrane-bound or secreted glycoproteins produced by B lymphocytes. In the recognition phase of humoral immunity, the membrane-bound immunoglobulins serve as receptors which, upon binding of a specific antigen, trigger the clonal expansion and differentiation of B lymphocytes into immunoglobulins-secreting plasma cells. Secreted immunoglobulins mediate the effector phase of humoral immunity, which results in the elimination of bound antigens. The antigen binding site is formed by the variable domain of one heavy chain, together with that of its associated light chain. Thus, each immunoglobulin has two antigen binding sites with remarkable affinity for a particular antigen. The variable domains are assembled by a process called V-(D)-J rearrangement and can then be subjected to somatic hypermutations which, after exposure to antigen and selection, allow affinity maturation for a particular antigen. Mediates IgG effector functions on monocytes triggering ADCC of virus-infected cells. In Homo sapiens (Human), this protein is Immunoglobulin heavy constant gamma 1.